A 492-amino-acid chain; its full sequence is MRGLGPSLRARRLLPLRYPPRPPGPRGPRLCSGLTASAMDELLRRAVPPTPAYELREKTPAPAEGQCADFVSFYGGLAEAAQRAELLGRLAQGFGVDHGQVAEQSAGVLQLRQQSREAAVLLQAEDRLRYALVPRYRGLFHHISKLDGGVRFLVQLRADLLEAQALKLVEGPHVREMNGVLKSMLSEWFSSGFLNLERVTWHSPCEVLQKISECEAVHPVKNWMDMKRRVGPYRRCYFFSHCSTPGDPLVVLHVALTGDISNNIQSIVKECPPSETEEKNRIAAAVFYSISLTQQGLQGVELGTFLIKRVVKELQKEFPHLGAFSSLSPIPGFTKWLLGLLNVQGKEYGRNELFTDSECKEIAEVTGDPVHESLKGLLSSGEWAKSEKLAQALQGPLMRLCAWYLYGEKHRGYALNPVANFHLQNGAVMWRINWMADSSLKGLTSSCGLMVNYRYYLEETGPNSISYLGSKNIKASEQILSLVAQFQSNSKL.

A mitochondrion-targeting transit peptide spans 1-38 (MRGLGPSLRARRLLPLRYPPRPPGPRGPRLCSGLTASA). Positions 39–189 (MDELLRRAVP…VLKSMLSEWF (151 aa)) are alpha-helical domain. N6-acetyllysine is present on Lys-58. Lys-167 carries the N6-acetyllysine; alternate modification. Position 167 is an N6-succinyllysine; alternate (Lys-167). The interval 190–492 (SSGFLNLERV…VAQFQSNSKL (303 aa)) is catalytic domain. Residue Lys-210 is modified to N6-acetyllysine. Lys-221 carries the N6-succinyllysine modification. 298-304 (QGVELGT) provides a ligand contact to malonyl-CoA. The residue at position 316 (Lys-316) is an N6-acetyllysine. Ser-328 contacts malonyl-CoA. The active-site Proton acceptor is the Ser-328. An N6-acetyllysine; alternate modification is found at Lys-385. Position 385 is an N6-succinyllysine; alternate (Lys-385). Lys-388 bears the N6-acetyllysine mark. Residue His-422 coordinates malonyl-CoA. His-422 functions as the Proton donor in the catalytic mechanism. Residues Lys-441 and Lys-471 each carry the N6-acetyllysine modification. The short motif at 490-492 (SKL) is the Microbody targeting signal element.

Homotetramer. Dimer of dimers. The two subunits within a dimer display conformational differences suggesting that at any given moment, only one of the two subunits is competent for malonyl-CoA binding and catalytic activity. Under oxidizing conditions, can form disulfide-linked homotetramers (in vitro). Associates with the peroxisomal targeting signal receptor PEX5. In terms of processing, acetylation at Lys-471 activates malonyl-CoA decarboxylase activity. Deacetylation at Lys-471 by SIRT4 represses activity, leading to promote lipogenesis. Interchain disulfide bonds may form in peroxisomes (Potential). Interchain disulfide bonds are not expected to form in the reducing environment of the cytoplasm and mitochondria. As to expression, expressed in liver, heart, skeletal muscles and adipose tissues (at protein level). Ubiquitous. Strongly expressed in liver, kidney, heart, skeletal muscle and adipose tissues. Weakly expressed in brain.

It localises to the cytoplasm. Its subcellular location is the mitochondrion matrix. The protein localises to the peroxisome. It is found in the peroxisome matrix. It carries out the reaction malonyl-CoA + H(+) = acetyl-CoA + CO2. Its pathway is metabolic intermediate biosynthesis; acetyl-CoA biosynthesis; acetyl-CoA from malonyl-CoA: step 1/1. With respect to regulation, malonyl-CoA decarboxylase activity does not require any cofactors or divalent metal ions. Functionally, catalyzes the conversion of malonyl-CoA to acetyl-CoA. In the fatty acid biosynthesis MCD selectively removes malonyl-CoA and thus assures that methyl-malonyl-CoA is the only chain elongating substrate for fatty acid synthase and that fatty acids with multiple methyl side chains are produced. In peroxisomes it may be involved in degrading intraperoxisomal malonyl-CoA, which is generated by the peroxisomal beta-oxidation of odd chain-length dicarboxylic fatty acids. Plays a role in the metabolic balance between glucose and lipid oxidation in muscle independent of alterations in insulin signaling. May play a role in controlling the extent of ischemic injury by promoting glucose oxidation. The polypeptide is Malonyl-CoA decarboxylase, mitochondrial (Rattus norvegicus (Rat)).